Reading from the N-terminus, the 154-residue chain is Putative nuclear shuttle protein (154 aa).

This sequence belongs to the nanoviridae nuclear shuttle protein family.

Its subcellular location is the host nucleus. It localises to the host cytoplasm. Putative nuclear shuttle protein. This Musa (BBTV) protein is Putative nuclear shuttle protein (DNA-N).